The sequence spans 211 residues: Imidazole glycerol phosphate synthase subunit HisH (211 aa).

Residues 1–206 (MIGIIDYGRG…GKWVNEDATV (206 aa)) form the Glutamine amidotransferase type-1 domain. The Nucleophile role is filled by Cys-79. Active-site residues include His-181 and Glu-183.

Heterodimer of HisH and HisF.

It localises to the cytoplasm. The enzyme catalyses 5-[(5-phospho-1-deoxy-D-ribulos-1-ylimino)methylamino]-1-(5-phospho-beta-D-ribosyl)imidazole-4-carboxamide + L-glutamine = D-erythro-1-(imidazol-4-yl)glycerol 3-phosphate + 5-amino-1-(5-phospho-beta-D-ribosyl)imidazole-4-carboxamide + L-glutamate + H(+). It carries out the reaction L-glutamine + H2O = L-glutamate + NH4(+). It participates in amino-acid biosynthesis; L-histidine biosynthesis; L-histidine from 5-phospho-alpha-D-ribose 1-diphosphate: step 5/9. In terms of biological role, IGPS catalyzes the conversion of PRFAR and glutamine to IGP, AICAR and glutamate. The HisH subunit catalyzes the hydrolysis of glutamine to glutamate and ammonia as part of the synthesis of IGP and AICAR. The resulting ammonia molecule is channeled to the active site of HisF. This Desulfitobacterium hafniense (strain Y51) protein is Imidazole glycerol phosphate synthase subunit HisH.